Consider the following 577-residue polypeptide: Arginine--tRNA ligase (577 aa).

A 'HIGH' region motif is present at residues proline 122–histidine 132.

The protein belongs to the class-I aminoacyl-tRNA synthetase family. In terms of assembly, monomer.

The protein resides in the cytoplasm. The catalysed reaction is tRNA(Arg) + L-arginine + ATP = L-arginyl-tRNA(Arg) + AMP + diphosphate. This is Arginine--tRNA ligase from Salmonella newport (strain SL254).